The sequence spans 781 residues: Transcription factor Sp3 (781 aa).

Basic and acidic residues predominate over residues 1 to 12 (MTAPEKPVKQEE). Disordered regions lie at residues 1–53 (MTAP…AAQD) and 65–88 (TCSK…AGAP). Positions 20–31 (SGGGGGGGGGHG) are enriched in gly residues. Positions 32 to 53 (EYLQQQQQHGNGAVAAAAAAQD) are enriched in low complexity. Ser-73 carries the phosphoserine modification. Lys-120 participates in a covalent cross-link: Glycyl lysine isopeptide (Lys-Gly) (interchain with G-Cter in SUMO). Positions 138 to 237 (QYVLPLQNLQ…IPQTGQVQVQ (100 aa)) are transactivation domain (Gln-rich). The tract at residues 301-338 (QAMDSSDNSERTGERVSPDINETNTDTDLFVPTSSSSQ) is disordered. Positions 308–317 (NSERTGERVS) are enriched in basic and acidic residues. The segment covering 320 to 338 (INETNTDTDLFVPTSSSSQ) has biased composition (polar residues). A transactivation domain (Gln-rich) region spans residues 350–499 (QQNTNSLTTS…TPVQTLTLGQ (150 aa)). The 9aaTAD motif lies at 461–469 (VTWQTFQVQ). The interval 534-620 (IQLHPGENAD…RGTNLGKKKQ (87 aa)) is repressor domain. N6-acetyllysine; alternate is present on Lys-551. Lys-551 is covalently cross-linked (Glycyl lysine isopeptide (Lys-Gly) (interchain with G-Cter in SUMO); alternate). Residue Lys-551 forms a Glycyl lysine isopeptide (Lys-Gly) (interchain with G-Cter in SUMO1); alternate linkage. Residue Lys-551 forms a Glycyl lysine isopeptide (Lys-Gly) (interchain with G-Cter in SUMO2); alternate linkage. Phosphoserine occurs at positions 563 and 566. A Glycyl lysine isopeptide (Lys-Gly) (interchain with G-Cter in SUMO2) cross-link involves residue Lys-593. A C2H2-type 1 zinc finger spans residues 621–645 (HICHIPGCGKVYGKTSHLRAHLRWH). Ser-646 is modified (phosphoserine). C2H2-type zinc fingers lie at residues 651-675 (FVCN…RRTH) and 681-703 (FVCP…IKTH).

Belongs to the Sp1 C2H2-type zinc-finger protein family. In terms of assembly, interacts with HLTF; the interaction may be required for basal transcriptional activity of HLTF. Interacts with HDAC1; the interaction deacetylates SP3 and regulates its transcriptional activity. Interacts with HDAC2 (preferably the CK2-phosphorylated form); the interaction deacetylates SP3 and regulates its transcriptional activity. Interacts with MEIS2 isoform 4 and PBX1 isoform PBX1a. Not glycosylated. Post-translationally, acetylated by histone acetyltransferase p300, deacetylated by HDACs. Acetylation/deacetylation states regulate transcriptional activity. Acetylation appears to activate transcription. Alternate sumoylation and acetylation at Lys-551 also control transcriptional activity. Ceramides can also regulate acetylation/deacetylation events through altering the interaction of HDAC with SP3. In vitro, C(18)-ceramides, but not C(16)-ceramides, increase the interaction of HDAC1 with SP3 and enhance the deacetylation of SP3 and the subsequent repression of the TERT promoter. In terms of processing, sumoylated on all isoforms. Sumoylated on 2 sites in longer isoforms with Lys-551 being the major site. Sumoylation at this site promotes nuclear localization to the nuclear periphery, nuclear dots and PML nuclear bodies. Sumoylation on Lys-551 represses the transactivation activity, except for the largest isoform, L-Sp3, which has little effect on transactivation. Alternate sumoylation and acetylation at Lys-551 also control transcriptional activity. Ubiquitously expressed.

The protein resides in the nucleus. It localises to the PML body. Transcriptional factor that can act as an activator or repressor depending on isoform and/or post-translational modifications. Binds to GT and GC boxes promoter elements. Competes with SP1 for the GC-box promoters. Weak activator of transcription but can activate a number of genes involved in different processes such as cell-cycle regulation, hormone-induction and house-keeping. The chain is Transcription factor Sp3 (SP3) from Homo sapiens (Human).